The chain runs to 196 residues: MSRRAEVTRNTSETQIRVALDLDGTGKQTLNTGVPFLDHMLDQIARHGMVDLDVTATGDTHIDDHHTVEDVGITLGQAVAKAIGDKKGIVRYGHSYVPLDEALSRVVIDFSGRPGLEFHVPFTRARVGSFDVDLSIEFFRGFVNHAGVTLHIDNLRGVNAHHQIETVFKAFGRALRMAVEIDPRAAGTIPSTKGAL.

It belongs to the imidazoleglycerol-phosphate dehydratase family.

The protein localises to the cytoplasm. The catalysed reaction is D-erythro-1-(imidazol-4-yl)glycerol 3-phosphate = 3-(imidazol-4-yl)-2-oxopropyl phosphate + H2O. It participates in amino-acid biosynthesis; L-histidine biosynthesis; L-histidine from 5-phospho-alpha-D-ribose 1-diphosphate: step 6/9. This chain is Imidazoleglycerol-phosphate dehydratase, found in Ralstonia nicotianae (strain ATCC BAA-1114 / GMI1000) (Ralstonia solanacearum).